The primary structure comprises 257 residues: Urease accessory protein UreD 3 (257 aa).

Positions 1–22 (MSVRATARLRAEPDGRDGTALP) are disordered.

The protein belongs to the UreD family. UreD, UreF and UreG form a complex that acts as a GTP-hydrolysis-dependent molecular chaperone, activating the urease apoprotein by helping to assemble the nickel containing metallocenter of UreC. The UreE protein probably delivers the nickel.

It localises to the cytoplasm. Its function is as follows. Required for maturation of urease via the functional incorporation of the urease nickel metallocenter. The chain is Urease accessory protein UreD 3 from Streptomyces griseus subsp. griseus (strain JCM 4626 / CBS 651.72 / NBRC 13350 / KCC S-0626 / ISP 5235).